A 498-amino-acid chain; its full sequence is Cytochrome P450 6B1 (498 aa).

Residue Cys-443 coordinates heme.

The protein belongs to the cytochrome P450 family. The cofactor is heme. In terms of tissue distribution, midgut microsome.

The protein resides in the endoplasmic reticulum membrane. Its subcellular location is the microsome membrane. It catalyses the reaction an organic molecule + reduced [NADPH--hemoprotein reductase] + O2 = an alcohol + oxidized [NADPH--hemoprotein reductase] + H2O + H(+). Its function is as follows. Enables the insect to feed on furanocoumarin-producing plants and evolved as an adaptation for detoxification of xanthotoxin and other furanocoumarins. The chain is Cytochrome P450 6B1 (CYP6B1) from Papilio polyxenes (Black swallowtail butterfly).